Reading from the N-terminus, the 590-residue chain is Muscarinic acetylcholine receptor M3 (590 aa).

The Extracellular segment spans residues 1–67 (MTLHSNSTTS…DPLGGHTVWQ (67 aa)). Asparagine 6, asparagine 15, asparagine 41, and asparagine 48 each carry an N-linked (GlcNAc...) asparagine glycan. The helical transmembrane segment at 68-91 (VVFIAFLTGILALVTIIGNILVIV) threads the bilayer. Over 92–104 (SFKVNKQLKTVNN) the chain is Cytoplasmic. A helical membrane pass occupies residues 105–130 (YFLLSLACADLIIGVISMNLFTTYII). Residues 131 to 142 (MNRWALGNLACD) lie on the Extracellular side of the membrane. A disulfide bridge links cysteine 141 with cysteine 221. Residues 143–164 (LWLAIDYVASNASVMNLLVISF) traverse the membrane as a helical segment. The Cytoplasmic portion of the chain corresponds to 165–184 (DRYFSITRPLTYRAKRTTKR). A helical membrane pass occupies residues 185–206 (AGVMIGLAWVISFVLWAPAILF). Topologically, residues 207 to 229 (WQYFVGKRTVPPGECFIQFLSEP) are extracellular. Residues 230–252 (TITFGTAIAAFYMPVTIMTILYW) traverse the membrane as a helical segment. Residues 253 to 491 (RIYKETEKRT…SLVKEKKAAQ (239 aa)) lie on the Cytoplasmic side of the membrane. The Basolateral sorting signal signature appears at 275–281 (AETENFV). The interval 323 to 357 (SSEQMDQDHSSSDSWNNNDAAASLENSASSDEEDI) is disordered. Residues 334–345 (SDSWNNNDAAAS) show a composition bias toward low complexity. Serine 385 is subject to Phosphoserine. The chain crosses the membrane as a helical span at residues 492 to 514 (TLSAILLAFIITWTPYNIMVLVN). The Extracellular segment spans residues 515 to 526 (TFCDSCIPKTFW). Cysteine 517 and cysteine 520 are oxidised to a cystine. The helical transmembrane segment at 527–546 (NLGYWLCYINSTVNPVCYAL) threads the bilayer. Residues 547-590 (CNKTFRTTFKMLLLCQCDKKKRRKQQYQQRQSVIFHKRAPEQAL) lie on the Cytoplasmic side of the membrane.

This sequence belongs to the G-protein coupled receptor 1 family. Muscarinic acetylcholine receptor subfamily. CHRM3 sub-subfamily. As to quaternary structure, homodimer; the dimers can form tetramers. Interacts with NALCN. Interacts with TMEM147.

It is found in the cell membrane. It localises to the postsynaptic cell membrane. The protein localises to the basolateral cell membrane. The protein resides in the endoplasmic reticulum membrane. The muscarinic acetylcholine receptor mediates various cellular responses, including inhibition of adenylate cyclase, breakdown of phosphoinositides and modulation of potassium channels through the action of G proteins. Primary transducing effect is Pi turnover. The sequence is that of Muscarinic acetylcholine receptor M3 (CHRM3) from Pongo pygmaeus (Bornean orangutan).